Consider the following 112-residue polypeptide: Tyrosine-protein phosphatase 17 (112 aa).

The 112-residue stretch at 1 to 112 folds into the Tyrosine-protein phosphatase domain; sequence WRMIWEHECC…QPHTAGPIVV (112 aa). Aspartate 82 contacts substrate.

This sequence belongs to the protein-tyrosine phosphatase family.

The catalysed reaction is O-phospho-L-tyrosyl-[protein] + H2O = L-tyrosyl-[protein] + phosphate. This is Tyrosine-protein phosphatase 17 (STY-17) from Styela plicata (Wrinkled sea squirt).